Reading from the N-terminus, the 629-residue chain is MSLNTKLALPIALGLSLVTVTAFVAYYVLKRDEEENDNKTVKITKINTIEIHVPKSIVPALIGRNGSNIKDLQKKSGAQIHFKKFTDQDYDVCVVRGRADTTQLAETLIHDFIKQQPTIMSESITVPSWSCGRIIGSGGENVNDISHRSGARVKVESPKSTDKVAEHLVTFRGTKEQIEVAKKLVENCVSLERCRREIEQSKRPPRHSSSPPSPCPSPGDRDADADAQGDVDHTRVKYKRPETTGPSIEVYVSAVSSPSRFWVQFVGPQVAQLDDLVAHMTEYYSKKENREAHTLRHVSVGQVVAAVFRHDGRWYRARVHDIRPNEFDSSQQVADVFYLDYGDSEYVATHELCELRADLLRLRFQAMECFLAGVRPASGEEAVSPSGQTWDKWHPQAVERFEELTQVARWKALVSRTCTYKKTATAEGEKDKEIPGIKLFDVTDEGELDVGAVLVAEGWAVAGPAPSPRPSPPRGHTTPFGDLSKSKVLSMTGGGGRSSSVPKDHKDDGSNVLTVEGDDSKDKDGITASKSLASGLEKSDRHPLSISNFDLSYPDPSRNKQLNGSDDFLHGERQNIDNEITIDTLVPPSPLSNAPILSKTLQDEFKANMNRIDSHHSNLENLGKSAFEK.

A helical membrane pass occupies residues 9 to 29; that stretch reads LPIALGLSLVTVTAFVAYYVL. KH domains follow at residues 46 to 109 and 119 to 185; these read INTI…ETLI and IMSE…KKLV. Residues 198–240 are disordered; it reads IEQSKRPPRHSSSPPSPCPSPGDRDADADAQGDVDHTRVKYKR. The segment covering 219–240 has biased composition (basic and acidic residues); sequence GDRDADADAQGDVDHTRVKYKR. One can recognise a Tudor domain in the interval 297–362; that stretch reads HVSVGQVVAA…CELRADLLRL (66 aa). Positions 464–526 are disordered; that stretch reads PAPSPRPSPP…GDDSKDKDGI (63 aa).

The protein belongs to the Tdrkh family. As to quaternary structure, interacts with (symmetrically methylated) Siwi. Interacts with (symmetrically methylated) Ago3. Interacts with PNLDC1/trimmer; interaction takes place on the mitochondrial surface and recruits PNLDC1/trimmer to Siwi-bound pre-piRNAs.

The protein resides in the mitochondrion outer membrane. In terms of biological role, participates in the primary piRNA biogenesis pathway and is required during spermatogenesis to repress transposable elements and prevent their mobilization, which is essential for the germline integrity. The piRNA metabolic process mediates the repression of transposable elements during meiosis by forming complexes composed of piRNAs and Piwi proteins (Siwi or Ago3) and govern the methylation and subsequent repression of transposons. Required for the final steps of primary piRNA biogenesis by participating in the processing of 31-37 nt intermediates into mature piRNAs: acts by recruiting the exonuclease PNLDC1/trimmer to Siwi-bound pre-piRNAs. In Bombyx mori (Silk moth), this protein is Tudor and KH domain-containing protein homolog.